Consider the following 421-residue polypeptide: Medium-chain specific acyl-CoA dehydrogenase, mitochondrial (421 aa).

A mitochondrion-targeting transit peptide spans Met-1–Thr-25. Lys-69 carries the post-translational modification N6-acetyllysine; alternate. Lys-69 carries the N6-succinyllysine; alternate modification. Lys-79 carries the post-translational modification N6-acetyllysine. Tyr-158–Ser-167 provides a ligand contact to FAD. Ser-167 is a binding site for octanoyl-CoA. N6-succinyllysine is present on Lys-179. Trp-191 to Thr-193 contributes to the FAD binding site. Lys-212 is subject to N6-acetyllysine; alternate. Lys-212 is subject to N6-succinyllysine; alternate. Octanoyl-CoA is bound at residue Ser-216. An N6-acetyllysine; alternate mark is found at Lys-217, Lys-259, and Lys-271. N6-succinyllysine; alternate is present on residues Lys-217, Lys-259, and Lys-271. Residues Asp-278 and Arg-281 each coordinate octanoyl-CoA. The residue at position 301 (Lys-301) is an N6-acetyllysine. FAD contacts are provided by residues Arg-306 to Thr-308 and His-316 to Gln-317. Octanoyl-CoA-binding residues include Arg-349 and Thr-351. At Thr-351 the chain carries Phosphothreonine. Gln-374–Gly-378 lines the FAD pocket. An octanoyl-CoA-binding site is contributed by Glu-401. Residue Glu-401 is the Proton acceptor of the active site. Gly-402 to Gln-405 is a binding site for FAD.

Belongs to the acyl-CoA dehydrogenase family. As to quaternary structure, homotetramer. Interacts with the heterodimeric electron transfer flavoprotein ETF. It depends on FAD as a cofactor. Post-translationally, acetylated. Could occur at proximity of the cofactor-binding sites and reduce the catalytic activity. Could be deacetylated by SIRT3.

It is found in the mitochondrion matrix. It carries out the reaction a medium-chain 2,3-saturated fatty acyl-CoA + oxidized [electron-transfer flavoprotein] + H(+) = a medium-chain (2E)-enoyl-CoA + reduced [electron-transfer flavoprotein]. The enzyme catalyses pentanoyl-CoA + oxidized [electron-transfer flavoprotein] + H(+) = (2E)-pentenoyl-CoA + reduced [electron-transfer flavoprotein]. The catalysed reaction is hexanoyl-CoA + oxidized [electron-transfer flavoprotein] + H(+) = (2E)-hexenoyl-CoA + reduced [electron-transfer flavoprotein]. It catalyses the reaction octanoyl-CoA + oxidized [electron-transfer flavoprotein] + H(+) = (2E)-octenoyl-CoA + reduced [electron-transfer flavoprotein]. It carries out the reaction decanoyl-CoA + oxidized [electron-transfer flavoprotein] + H(+) = (2E)-decenoyl-CoA + reduced [electron-transfer flavoprotein]. The enzyme catalyses dodecanoyl-CoA + oxidized [electron-transfer flavoprotein] + H(+) = (2E)-dodecenoyl-CoA + reduced [electron-transfer flavoprotein]. The catalysed reaction is tetradecanoyl-CoA + oxidized [electron-transfer flavoprotein] + H(+) = (2E)-tetradecenoyl-CoA + reduced [electron-transfer flavoprotein]. It catalyses the reaction oxidized [electron-transfer flavoprotein] + hexadecanoyl-CoA + H(+) = (2E)-hexadecenoyl-CoA + reduced [electron-transfer flavoprotein]. Its pathway is lipid metabolism; mitochondrial fatty acid beta-oxidation. Medium-chain specific acyl-CoA dehydrogenase is one of the acyl-CoA dehydrogenases that catalyze the first step of mitochondrial fatty acid beta-oxidation, an aerobic process breaking down fatty acids into acetyl-CoA and allowing the production of energy from fats. The first step of fatty acid beta-oxidation consists in the removal of one hydrogen from C-2 and C-3 of the straight-chain fatty acyl-CoA thioester, resulting in the formation of trans-2-enoyl-CoA. Electron transfer flavoprotein (ETF) is the electron acceptor that transfers electrons to the main mitochondrial respiratory chain via ETF-ubiquinone oxidoreductase (ETF dehydrogenase). Among the different mitochondrial acyl-CoA dehydrogenases, medium-chain specific acyl-CoA dehydrogenase acts specifically on acyl-CoAs with saturated 6 to 12 carbons long primary chains. This chain is Medium-chain specific acyl-CoA dehydrogenase, mitochondrial, found in Rattus norvegicus (Rat).